A 489-amino-acid polypeptide reads, in one-letter code: Probable cytochrome P450 CYP44 (489 aa).

The interval 12–31 is disordered; that stretch reads VEKCPYSPTSSPNTPPRTFS. Positions 16–29 are enriched in low complexity; sequence PYSPTSSPNTPPRT. Cys438 lines the heme pocket.

It belongs to the cytochrome P450 family. The cofactor is heme.

Its function is as follows. Cytochromes P450 are a group of heme-thiolate monooxygenases. They oxidize a variety of structurally unrelated compounds, including steroids, fatty acids, and xenobiotics. This Caenorhabditis elegans protein is Probable cytochrome P450 CYP44 (cyp-44A1).